A 395-amino-acid polypeptide reads, in one-letter code: Nucleoside diphosphate kinase homolog 7 (395 aa).

Residues 22 to 110 (QSERFAFIAE…YTARQLGSRK (89 aa)) enclose the DM10 domain.

This sequence belongs to the NDK family. Component of sperm flagellar doublet microtubules. Component of the gamma-tubulin ring complex.

The protein localises to the cytoplasm. It is found in the cytoskeleton. The protein resides in the microtubule organizing center. Its subcellular location is the centrosome. It localises to the nucleus. The protein localises to the spindle. It is found in the cilium axoneme. The protein resides in the flagellum axoneme. Its subcellular location is the cell projection. It localises to the cilium. Its function is as follows. Possesses an intrinsic kinase activity. Displays 3'-5' exonuclease activity with a preference for single-stranded DNA. Does not seem to have nucleoside diphosphate kinase activity. Functional component of the gamma-tubulin ring complex, implicated in the regulation of the microtubule-nucleating activity of the gamma-tubulin ring complex in centrosomes, in a kinase activity-dependent manner. Part of the dynein-decorated doublet microtubules (DMTs) in cilia axoneme, which is required for motile cilia beating. The protein is Nucleoside diphosphate kinase homolog 7 of Mus musculus (Mouse).